Here is a 421-residue protein sequence, read N- to C-terminus: Testin (421 aa).

In terms of domain architecture, PET spans 92-199 (MILTNPVAAK…GDVKLPREMD (108 aa)). Residues 133 to 164 (EKQPVAGSEGAQYRKKQLAKQLPAHDQDPSKC) form a disordered region. Residues 155 to 164 (PAHDQDPSKC) are compositionally biased toward basic and acidic residues. 3 consecutive LIM zinc-binding domains span residues 234–297 (YSCY…CDSE), 299–359 (PRCA…NHAV), and 362–421 (QGCH…KMMS).

This sequence belongs to the prickle / espinas / testin family. In terms of assembly, interacts via LIM domain 1 with ZYX. Interacts (via LIM domain 3) with ENAH and VASP. Interacts with ALKBH4, talin, actin, alpha-actinin, GRIP1 and PXN. Interacts (via LIM domain 2) with ACTL7A (via N-terminus). Heterodimer with ACTL7A; the heterodimer interacts with ENAH to form a heterotrimer.

The protein resides in the cytoplasm. Its subcellular location is the cell junction. The protein localises to the focal adhesion. Scaffold protein that may play a role in cell adhesion, cell spreading and in the reorganization of the actin cytoskeleton. Plays a role in the regulation of cell proliferation. May act as a tumor suppressor. The sequence is that of Testin (TES) from Mustela putorius furo (European domestic ferret).